The chain runs to 366 residues: Alcohol dehydrogenase (366 aa).

Zn(2+)-binding residues include Cys41, His62, Glu63, and Asp167.

Belongs to the zinc-containing alcohol dehydrogenase family. As to quaternary structure, homotetramer. It depends on Zn(2+) as a cofactor.

The catalysed reaction is a primary alcohol + NAD(+) = an aldehyde + NADH + H(+). It carries out the reaction a secondary alcohol + NAD(+) = a ketone + NADH + H(+). The enzyme catalyses (R,R)-butane-2,3-diol + NAD(+) = (R)-acetoin + NADH + H(+). It catalyses the reaction an aldehyde + NAD(+) + H2O = a carboxylate + NADH + 2 H(+). In terms of biological role, multifunctional alcohol dehydrogenase exhibiting NAD(+)-dependent dehydrogenase activities for 2,3-butanediol, ethanol and acetaldehyde, and reductase activities for acetoin (NADH-dependent), and diacetyl and acetaldehyde (independently of whether NADH or NADPH is the reductant). The rate of oxidation of 2,3-butanediol is much higher than for the oxidation of ethanol. Has acetaldehyde dehydrogenase activity leading to acetate formation. May function in the release of excess reducing power in the absence of exogenous hydrogen acceptors such as oxygen. This chain is Alcohol dehydrogenase (adh), found in Cupriavidus necator (Alcaligenes eutrophus).